The chain runs to 116 residues: Secreted RxLR effector protein 9 (116 aa).

An N-terminal signal peptide occupies residues methionine 1 to alanine 17. The RxLR-dEER signature appears at arginine 49–arginine 64.

It belongs to the RxLR effector family.

The protein resides in the secreted. It is found in the host cytoplasm. It localises to the host nucleus. Its function is as follows. Effector that acts as a broad suppressor of cell death to interrupt plant immunity. Inhibits cell death induced by cell death-inducing proteins, including the PAMP elicitor INF1 from P.infestans. In Plasmopara viticola (Downy mildew of grapevine), this protein is Secreted RxLR effector protein 9.